A 195-amino-acid polypeptide reads, in one-letter code: Ferredoxin-2, mitochondrial (195 aa).

Residues Met-1–Cys-61 constitute a mitochondrion transit peptide. The 102-residue stretch at Asn-81–Thr-182 folds into the 2Fe-2S ferredoxin-type domain. Residues Cys-117, Cys-123, Cys-126, and Cys-163 each coordinate [2Fe-2S] cluster.

It belongs to the adrenodoxin/putidaredoxin family. Component of the mitochondrial core iron-sulfur cluster (ISC) complex composed of NFS1, LYRM4, NDUFAB1, ISCU, FXN, and FDX2; this complex is a heterohexamer containing two copies of each monomer. Form a heterodimer complex with NFS1. Requires [2Fe-2S] cluster as cofactor.

Its subcellular location is the mitochondrion. The protein resides in the mitochondrion matrix. Functionally, electron donor, of the core iron-sulfur cluster (ISC) assembly complex, that acts to reduce the persulfide into sulfide during [2Fe-2S] clusters assembly on the scaffolding protein ISCU. The core iron-sulfur cluster (ISC) assembly complex is involved in the de novo synthesis of a [2Fe-2S] cluster, the first step of the mitochondrial iron-sulfur protein biogenesis. This process is initiated by the cysteine desulfurase complex (NFS1:LYRM4:NDUFAB1) that produces persulfide which is delivered on the scaffold protein ISCU in a FXN-dependent manner. Then this complex is stabilized by FDX2 which provides reducing equivalents to accomplish the [2Fe-2S] cluster assembly. Finally, the [2Fe-2S] cluster is transferred from ISCU to chaperone proteins, including HSCB, HSPA9 and GLRX5. Essential for coenzyme Q biosynthesis: together with FDXR, transfers the electrons required for the hydroxylation reaction performed by COQ6. The protein is Ferredoxin-2, mitochondrial of Danio rerio (Zebrafish).